The primary structure comprises 692 residues: Methionine--tRNA ligase (692 aa).

The 'HIGH' region signature appears at 12-22 (PYANGSFHIGH). Residues Cys-143, Cys-146, Cys-156, and Cys-159 each contribute to the Zn(2+) site. Residues 341–345 (KMSKS) carry the 'KMSKS' region motif. Lys-344 contributes to the ATP binding site. In terms of domain architecture, tRNA-binding spans 586 to 692 (DFAKIDLRIA…PGAQPGMRVR (107 aa)).

Belongs to the class-I aminoacyl-tRNA synthetase family. MetG type 1 subfamily. Homodimer. Requires Zn(2+) as cofactor.

Its subcellular location is the cytoplasm. The catalysed reaction is tRNA(Met) + L-methionine + ATP = L-methionyl-tRNA(Met) + AMP + diphosphate. Functionally, is required not only for elongation of protein synthesis but also for the initiation of all mRNA translation through initiator tRNA(fMet) aminoacylation. The sequence is that of Methionine--tRNA ligase from Bordetella parapertussis (strain 12822 / ATCC BAA-587 / NCTC 13253).